Here is a 250-residue protein sequence, read N- to C-terminus: Sugar fermentation stimulation protein homolog (250 aa).

Belongs to the SfsA family.

This is Sugar fermentation stimulation protein homolog from Synechococcus sp. (strain CC9311).